Here is a 785-residue protein sequence, read N- to C-terminus: Semaphorin-3F (785 aa).

A signal peptide spans Met1–Pro18. One can recognise a Sema domain in the interval Arg31–Leu545. A glycan (N-linked (GlcNAc...) asparagine) is linked at Asn53. A disulfide bridge links Cys104 with Cys115. An N-linked (GlcNAc...) asparagine glycan is attached at Asn126. Cystine bridges form between Cys133–Cys142, Cys300–Cys412, Cys324–Cys372, and Cys548–Cys566. The tract at residues Arg583–Asn602 is disordered. One can recognise an Ig-like C2-type domain in the interval Ala605–His695. Cys678 and Cys746 are oxidised to a cystine. The interval Val753 to Thr785 is disordered. Residues Pro775 to Thr785 are compositionally biased toward basic residues.

It belongs to the semaphorin family. As to expression, expressed ubiquitously in adulthood. During embryogenesis, expressed in subregions of the central nervous system and various other tissues like skin, kidney, lung and intestine.

It localises to the secreted. This chain is Semaphorin-3F (Sema3f), found in Mus musculus (Mouse).